Consider the following 196-residue polypeptide: Holliday junction branch migration complex subunit RuvA (196 aa).

The interval 1-63 (MYDYIKGKLS…DDAHLLFGFH (63 aa)) is domain I. The segment at 64-142 (TENEKEIFLN…EASGESATSR (79 aa)) is domain II. Positions 143–148 (KVSSEQ) are flexible linker. Residues 148 to 196 (QNSNLEEAMEALLALGYKATELKKVKAFFEGTNETVEQYIKSSLKMLMK) form a domain III region.

It belongs to the RuvA family. As to quaternary structure, homotetramer. Forms an RuvA(8)-RuvB(12)-Holliday junction (HJ) complex. HJ DNA is sandwiched between 2 RuvA tetramers; dsDNA enters through RuvA and exits via RuvB. An RuvB hexamer assembles on each DNA strand where it exits the tetramer. Each RuvB hexamer is contacted by two RuvA subunits (via domain III) on 2 adjacent RuvB subunits; this complex drives branch migration. In the full resolvosome a probable DNA-RuvA(4)-RuvB(12)-RuvC(2) complex forms which resolves the HJ.

The protein localises to the cytoplasm. In terms of biological role, the RuvA-RuvB-RuvC complex processes Holliday junction (HJ) DNA during genetic recombination and DNA repair, while the RuvA-RuvB complex plays an important role in the rescue of blocked DNA replication forks via replication fork reversal (RFR). RuvA specifically binds to HJ cruciform DNA, conferring on it an open structure. The RuvB hexamer acts as an ATP-dependent pump, pulling dsDNA into and through the RuvAB complex. HJ branch migration allows RuvC to scan DNA until it finds its consensus sequence, where it cleaves and resolves the cruciform DNA. The sequence is that of Holliday junction branch migration complex subunit RuvA from Streptococcus agalactiae serotype III (strain NEM316).